Here is a 58-residue protein sequence, read N- to C-terminus: uncharacterized protein (58 aa).

The protein localises to the plastid. It localises to the chloroplast. This is an uncharacterized protein from Chlamydomonas reinhardtii (Chlamydomonas smithii).